The following is a 200-amino-acid chain: Probable gluconokinase (200 aa).

34–41 serves as a coordination point for ATP; that stretch reads GVSGSGKT.

This sequence belongs to the gluconokinase GntK/GntV family.

The catalysed reaction is D-gluconate + ATP = 6-phospho-D-gluconate + ADP + H(+). It functions in the pathway carbohydrate acid metabolism; D-gluconate degradation. The chain is Probable gluconokinase from Dictyostelium discoideum (Social amoeba).